The sequence spans 684 residues: Pentatricopeptide repeat-containing protein At4g14850 (684 aa).

PPR repeat units follow at residues 5–39 (SADALGLLLKNAISASSMRLGRVVHARIVKTLDSP), 41–71 (PPFLANYLINMYSKLDHPESARLVLRLTPAR), 72–106 (NVVSWTSLISGLAQNGHFSTALVEFFEMRREGVVP), 107–141 (NDFTFPCAFKAVASLRLPVTGKQIHALAVKCGRIL), 142–172 (DVFVGCSAFDMYCKTRLRDDARKLFDEIPER), 173–207 (NLETWNAFISNSVTDGRPREAIEAFIEFRRIDGHP), 208–242 (NSITFCAFLNACSDWLHLNLGMQLHGLVLRSGFDT), 243–277 (DVSVCNGLIDFYGKCKQIRSSEIIFTEMGTKNAVS), 278–308 (WCSLVAAYVQNHEDEKASVLYLRSRKDIVET), 309–343 (SDFMISSVLSACAGMAGLELGRSIHAHAVKACVER), 344–374 (TIFVGSALVDMYGKCGCIEDSEQAFDEMPEK), 375–409 (NLVTRNSLIGGYAHQGQVDMALALFEEMAPRGCGP), 412–442 (NYMTFVSLLSACSRAGAVENGMKIFDSMRST), and 448–478 (GAEHYSCIVDMLGRAGMVERAYEFIKKMPIQ). The segment at 483–558 (VWGALQNACR…GAGYSWITVK (76 aa)) is type E motif; degenerate. Residues 559-589 (NQVHAFQAKDRSHILNKEIQTTLAKLRNEME) form a type E(+) motif; degenerate region. Positions 590–684 (AAGYKPDLKL…DGICSCKDYW (95 aa)) are type DYW motif.

This sequence belongs to the PPR family. PCMP-H subfamily.

Acts as a regulatory factor of isoprenoid biosynthesis. Could bind RNA. The polypeptide is Pentatricopeptide repeat-containing protein At4g14850 (LOI1) (Arabidopsis thaliana (Mouse-ear cress)).